The chain runs to 1235 residues: MPAGGRAGSLKDPDVAELFFKDDPEKLFSDLREIGHGSFGAVYFARDVRNSEVVAIKKMSYSGKQSNEKWQDIIKEVRFLQKLRHPNTIQYRGCYLREHTAWLVMEYCLGSASDLLEVHKKPLQEVEIAAVTHGALQGLAYLHSHNMIHRDVKAGNILLSEPGLVKLGDFGSASIMAPANSFVGTPYWMAPEVILAMDEGQYDGKVDVWSLGITCIELAERKPPLFNMNAMSALYHIAQNESPVLQSGHWSEYFRNFVDSCLQKIPQDRPTSEVLLKHRFVLRERPPTVIMDLIQRTKDAVRELDNLQYRKMKKILFQEAPNGPGAEAPEEEEEAEPYMHRAGTLTSLESSHSVPSMSISASSQSSSVNSLADASDNEEEEEEEEEEEEEEEGPEAREMAMMQEGEHTVTSHSSIIHRLPGSDNLYDDPYQPEITPSPLQPPAAPAPTSTTSSARRRAYCRNRDHFATIRTASLVSRQIQEHEQDSALREQLSGYKRMRRQHQKQLLALESRLRGEREEHSARLQRELEAQRAGFGAEAEKLARRHQAIGEKEARAAQAEERKFQQHILGQQKKELAALLEAQKRTYKLRKEQLKEELQENPSTPKREKAEWLLRQKEQLQQCQAEEEAGLLRRQRQYFELQCRQYKRKMLLARHSLDQDLLREDLNKKQTQKDLECALLLRQHEATRELELRQLQAVQRTRAELTRLQHQTELGNQLEYNKRREQELRQKHAAQVRQQPKSLKVRAGQRPPGLPLPIPGALGPPNTGTPIEQQPCSPGQEAVLDQRMLGEEEEAVGERRILGKEGATLEPKQQRILGEESGAPSPSPQKHGSLVDEEVWGLPEEIEELRVPSLVPQERSIVGQEEAGTWSLWGKEDESLLDEEFELGWVQGPALTPVPEEEEEEEEGAPIGTPRDPGDGCPSPDIPPEPPPTHLRPCPASQLPGLLSHGLLAGLSFAVGSSSGLLPLLLLLLLPLLAAQGGGGLQAALLALEVGLVGLGASYLLLCTALHLPSSLFLLLAQGTALGAVLGLSWRRGLMGVPLGLGAAWLLAWPGLALPLVAMAAGGRWVRQQGPRVRRGISRLWLRVLLRLSPMAFRALQGCGAVGDRGLFALYPKTNKDGFRSRLPVPGPRRRNPRTTQHPLALLARVWVLCKGWNWRLARASQGLASHLPPWAIHTLASWGLLRGERPTRIPRLLPRSQRQLGPPASRQPLPGTLAGRRSRTRQSRALPPWR.

S9 carries the post-translational modification Phosphoserine. Residues 28-281 (FSDLREIGHG…SEVLLKHRFV (254 aa)) form the Protein kinase domain. Residues 34–42 (IGHGSFGAV) and K57 contribute to the ATP site. Residue D151 is the Proton acceptor of the active site. Position 181 is a phosphoserine (S181). Positions 318–457 (QEAPNGPGAE…TSTTSSARRR (140 aa)) are disordered. Positions 350–374 (SSHSVPSMSISASSQSSSVNSLADA) are enriched in low complexity. The span at 375 to 393 (SDNEEEEEEEEEEEEEEEG) shows a compositional bias: acidic residues. Over residues 394–409 (PEAREMAMMQEGEHTV) the composition is skewed to basic and acidic residues. S414 is modified (phosphoserine). Coiled-coil stretches lie at residues 486–547 (SALR…RRHQ) and 574–601 (KELA…LQEN). S656 is subject to Phosphoserine. Positions 681–713 (LRQHEATRELELRQLQAVQRTRAELTRLQHQTE) form a coiled coil. Disordered regions lie at residues 732–777 (HAAQ…QPCS), 804–835 (KEGA…GSLV), and 891–939 (QGPA…RPCP). Residues 766–777 (NTGTPIEQQPCS) are compositionally biased toward polar residues. A phosphoserine mark is found at S777, S825, and S827. Residues 899–908 (PEEEEEEEEG) show a composition bias toward acidic residues. The segment covering 924-934 (PDIPPEPPPTH) has biased composition (pro residues). 2 helical membrane passes run 965–985 (LLPL…GGGL) and 987–1007 (AALL…LLLC). A phosphoserine mark is found at H1011 and G1031. A run of 3 helical transmembrane segments spans residues 1012–1032 (LPSS…VLGL), 1043–1063 (LGLG…LVAM), and 1166–1186 (QGLA…WGLL). Positions 1198 to 1235 (LPRSQRQLGPPASRQPLPGTLAGRRSRTRQSRALPPWR) are disordered.

The protein belongs to the protein kinase superfamily. STE Ser/Thr protein kinase family. STE20 subfamily. As to quaternary structure, interacts with MAP2K3 and MAP2K6. Self-associates. Interacts with tubulins through the C-terminal domain. Interacts with MAP3K7 and interferes with MAP3K7-binding to CHUK and thus prevents NF-kappa-B activation. Isoform 2 interacts with PCDH8; this complex may also include CDH2. Requires Mg(2+) as cofactor. Isoforms 1 and 2 are autophosphorylated. Post-translationally, C-terminal cleavage of isoform 1 and subsequent nuclear localization requires CASP9 activity. In terms of processing, autophosphorylated. Phosphorylated by ATM. Phosphorylated on Ser-1031 by MAPK14. This phosphorylation is required PCDH8 for endocytosis. In terms of tissue distribution, ubiquitously expressed, with a higher level of expression in testis and brain.

It localises to the cytoplasmic vesicle membrane. It is found in the cytoplasm. The protein resides in the cytoskeleton. The protein localises to the nucleus. Its subcellular location is the cell projection. It localises to the dendrite. The catalysed reaction is L-seryl-[protein] + ATP = O-phospho-L-seryl-[protein] + ADP + H(+). The enzyme catalyses L-threonyl-[protein] + ATP = O-phospho-L-threonyl-[protein] + ADP + H(+). Selectively inhibited by the enantiopure organoruthenium inhibitor 9E1. Activated following arsenic trioxide (As(2)O(3)) treatment. Its function is as follows. Serine/threonine-protein kinase involved in different processes such as membrane blebbing and apoptotic bodies formation DNA damage response and MAPK14/p38 MAPK stress-activated MAPK cascade. Phosphorylates itself, MBP, activated MAPK8, MAP2K3, MAP2K6 and tubulins. Activates the MAPK14/p38 MAPK signaling pathway through the specific activation and phosphorylation of the upstream MAP2K3 and MAP2K6 kinases. In response to DNA damage, involved in the G2/M transition DNA damage checkpoint by activating the p38/MAPK14 stress-activated MAPK cascade, probably by mediating phosphorylation of upstream MAP2K3 and MAP2K6 kinases. Isoform 1, but not isoform 2, plays a role in apoptotic morphological changes, including cell contraction, membrane blebbing and apoptotic bodies formation. This function, which requires the activation of MAPK8/JNK and nuclear localization of C-terminally truncated isoform 1, may be linked to the mitochondrial CASP9-associated death pathway. Isoform 1 binds to microtubules and affects their organization and stability independently of its kinase activity. Prevents MAP3K7-mediated activation of CHUK, and thus NF-kappa-B activation, but not that of MAPK8/JNK. May play a role in the osmotic stress-MAPK8 pathway. Isoform 2, but not isoform 1, is required for PCDH8 endocytosis. Following homophilic interactions between PCDH8 extracellular domains, isoform 2 phosphorylates and activates MAPK14/p38 MAPK which in turn phosphorylates isoform 2. This process leads to PCDH8 endocytosis and CDH2 cointernalization. Both isoforms are involved in MAPK14 phosphorylation. The protein is Serine/threonine-protein kinase TAO2 (TAOK2) of Homo sapiens (Human).